The chain runs to 623 residues: Leucine aminopeptidase 2 (623 aa).

A disordered region spans residues Met-1–Tyr-23. The segment covering Asn-7 to Tyr-23 has biased composition (polar residues). A peptide-binding positions include Gln-145–Gln-147 and Pro-277–Glu-282. His-306 is a Zn(2+) binding site. Catalysis depends on Glu-307, which acts as the Proton acceptor. Residues His-310 and Glu-329 each contribute to the Zn(2+) site. The active-site Proton donor is the Tyr-394.

The protein belongs to the peptidase M1 family. Zn(2+) serves as cofactor.

The protein localises to the cytoplasm. The protein resides in the nucleus. It catalyses the reaction an epoxide + H2O = an ethanediol. Aminopeptidase that preferentially cleaves di- and tripeptides. Also has low epoxide hydrolase activity (in vitro). Can hydrolyze the epoxide leukotriene LTA(4) but it forms preferentially 5,6-dihydroxy-7,9,11,14-eicosatetraenoic acid rather than the cytokine leukotriene B(4) as the product compared to the homologous mammalian enzyme (in vitro). The sequence is that of Leucine aminopeptidase 2 from Ajellomyces capsulatus (strain NAm1 / WU24) (Darling's disease fungus).